The sequence spans 147 residues: Large ribosomal subunit protein uL16 (147 aa).

The span at methionine 1–arginine 16 shows a compositional bias: basic residues. A disordered region spans residues methionine 1–glutamine 20.

This sequence belongs to the universal ribosomal protein uL16 family. As to quaternary structure, part of the 50S ribosomal subunit.

In terms of biological role, binds 23S rRNA and is also seen to make contacts with the A and possibly P site tRNAs. In Alkaliphilus metalliredigens (strain QYMF), this protein is Large ribosomal subunit protein uL16.